The sequence spans 896 residues: Histone-lysine N-methyltransferase CLF (896 aa).

Disordered stretches follow at residues 344–419 (DNLK…NRRI) and 459–514 (SGIK…DGCD). Residues 358–390 (GSSGQKTKSQQSESSSTARVSSESSESEVQLLS) show a composition bias toward low complexity. Composition is skewed to polar residues over residues 391–400 (NKSPQHSPGL), 465–476 (VVSSQCNSPSTR), and 485–498 (QMENNSSFVDAQSD). Over residues 504 to 514 (NNEHSATDGCD) the composition is skewed to basic and acidic residues. In terms of domain architecture, CXC spans 633–732 (RKRITERKDQ…TLGVPNQRGD (100 aa)). Residues 747–862 (QRVLLGRSDV…AGEELFYDYR (116 aa)) enclose the SET domain. Y861 provides a ligand contact to S-adenosyl-L-methionine. Over residues 869-884 (PAWARKPEGPGAKDDA) the composition is skewed to basic and acidic residues. The interval 869 to 896 (PAWARKPEGPGAKDDAQPSTGRAKKLAH) is disordered.

It belongs to the class V-like SAM-binding methyltransferase superfamily. Histone-lysine methyltransferase family. EZ subfamily. As to quaternary structure, interacts with FIE1. Component of the polycomb repressive complex 2 (PRC2), composed of the core PRC2 components FIE2, EMF2B and EZ1. PRC2 methylates 'Lys-27' residues of histone H3 (H3K27me3), leading to transcriptional repression of the affected target gene. In terms of tissue distribution, widely expressed. Highly expressed in young panicle.

It carries out the reaction L-lysyl(27)-[histone H3] + 3 S-adenosyl-L-methionine = N(6),N(6),N(6)-trimethyl-L-lysyl(27)-[histone H3] + 3 S-adenosyl-L-homocysteine + 3 H(+). In terms of biological role, polycomb group (PcG) protein. Catalytic subunit of some PcG multiprotein complex, which methylates 'Lys-27' of histone H3, leading to transcriptional repression of the affected target genes. PcG proteins act by forming multiprotein complexes, which are required to maintain the transcriptionally repressive state of homeotic genes throughout development. PcG proteins are not required to initiate repression, but to maintain it during later stages of development. Involved in the regulation of flowering. Represses flowering under long day (LD) conditions. Regulates the trimethylation on histone H3 'Lys-27' (H3K27me3) of the flowering regulators MADS14, MADS15, RFT1, EHD1, HD3A and LF. This Oryza sativa subsp. japonica (Rice) protein is Histone-lysine N-methyltransferase CLF.